Consider the following 239-residue polypeptide: 7-cyano-7-deazaguanine synthase (239 aa).

An ATP-binding site is contributed by Phe-12–Leu-22. The Zn(2+) site is built by Cys-200, Cys-215, Cys-218, and Cys-221.

It belongs to the QueC family. Zn(2+) is required as a cofactor.

It carries out the reaction 7-carboxy-7-deazaguanine + NH4(+) + ATP = 7-cyano-7-deazaguanine + ADP + phosphate + H2O + H(+). It functions in the pathway purine metabolism; 7-cyano-7-deazaguanine biosynthesis. Its function is as follows. Catalyzes the ATP-dependent conversion of 7-carboxy-7-deazaguanine (CDG) to 7-cyano-7-deazaguanine (preQ(0)). The protein is 7-cyano-7-deazaguanine synthase of Hyphomonas neptunium (strain ATCC 15444).